A 507-amino-acid polypeptide reads, in one-letter code: Methionine--tRNA ligase (507 aa).

The 'HIGH' region motif lies at 12-22 (YYVNDVSHIGH). Positions 295 to 299 (KISKS) match the 'KMSKS' region motif. Lysine 298 is an ATP binding site.

This sequence belongs to the class-I aminoacyl-tRNA synthetase family. MetG type 2B subfamily. As to quaternary structure, monomer.

It is found in the cytoplasm. It catalyses the reaction tRNA(Met) + L-methionine + ATP = L-methionyl-tRNA(Met) + AMP + diphosphate. Its function is as follows. Is required not only for elongation of protein synthesis but also for the initiation of all mRNA translation through initiator tRNA(fMet) aminoacylation. The polypeptide is Methionine--tRNA ligase (Rickettsia typhi (strain ATCC VR-144 / Wilmington)).